We begin with the raw amino-acid sequence, 189 residues long: Putative OVARIAN TUMOR DOMAIN-containing deubiquitinating enzyme 8 (189 aa).

The 103-residue stretch at 1-103 (MMKSDGNCQF…GIHFNSIYKK (103 aa)) folds into the OTU domain. Asp5 is an active-site residue. Cys8 serves as the catalytic Nucleophile. His96 is a catalytic residue. A disordered region spans residues 105–189 (KEKGSRSSSS…NRNHHFHYSE (85 aa)). A coiled-coil region spans residues 120–181 (WMKLQRKKEN…KKEKKEKKNR (62 aa)). 2 consecutive short sequence motifs (nuclear localization signal) follow at residues 125-132 (RKKENEAK) and 163-170 (KKKAKVQK). Positions 126–174 (KKENEAKKKEEEEKERKDMEKEEKKKDKEDKKKDKEDKKKAKVQKEKKE) are enriched in basic and acidic residues. A compositionally biased stretch (basic residues) spans 175 to 189 (KKEKKNRNHHFHYSE).

The protein belongs to the peptidase C85 family.

The protein localises to the nucleus. It carries out the reaction Thiol-dependent hydrolysis of ester, thioester, amide, peptide and isopeptide bonds formed by the C-terminal Gly of ubiquitin (a 76-residue protein attached to proteins as an intracellular targeting signal).. In terms of biological role, hydrolase that can remove conjugated ubiquitin from proteins in vitro and may therefore play an important regulatory role at the level of protein turnover by preventing degradation. The chain is Putative OVARIAN TUMOR DOMAIN-containing deubiquitinating enzyme 8 from Arabidopsis thaliana (Mouse-ear cress).